Consider the following 541-residue polypeptide: Light-independent protochlorophyllide reductase subunit B (541 aa).

Residue Asp-36 participates in [4Fe-4S] cluster binding. The active-site Proton donor is Asp-287. 422-423 (GL) contacts substrate.

It belongs to the ChlB/BchB/BchZ family. Protochlorophyllide reductase is composed of three subunits; BchL, BchN and BchB. Forms a heterotetramer of two BchB and two BchN subunits. [4Fe-4S] cluster is required as a cofactor.

The catalysed reaction is chlorophyllide a + oxidized 2[4Fe-4S]-[ferredoxin] + 2 ADP + 2 phosphate = protochlorophyllide a + reduced 2[4Fe-4S]-[ferredoxin] + 2 ATP + 2 H2O. The protein operates within porphyrin-containing compound metabolism; bacteriochlorophyll biosynthesis (light-independent). Its function is as follows. Component of the dark-operative protochlorophyllide reductase (DPOR) that uses Mg-ATP and reduced ferredoxin to reduce ring D of protochlorophyllide (Pchlide) to form chlorophyllide a (Chlide). This reaction is light-independent. The NB-protein (BchN-BchB) is the catalytic component of the complex. The protein is Light-independent protochlorophyllide reductase subunit B of Rhodopseudomonas palustris (strain HaA2).